A 205-amino-acid chain; its full sequence is Protein phosphatase inhibitor 2 (205 aa).

Disordered regions lie at residues 1–46 (MAAS…KSQK) and 64–205 (GLMK…SQSS). A2 bears the N-acetylalanine mark. Required for binding PPP1CC stretches follow at residues 12–17 (KGILKN) and 43–55 (KSQK…ILAT). The span at 17-26 (NKTSSTSSRV) shows a compositional bias: polar residues. Over residues 35–46 (SVDEELSKKSQK) the composition is skewed to basic and acidic residues. S44 carries the phosphoserine; by ATM modification. T73 carries the phosphothreonine; by GSK3 modification. The segment covering 80–91 (GDDDDAYSDTET) has biased composition (acidic residues). Residue S87 is modified to Phosphoserine. Phosphothreonine occurs at positions 89, 92, and 96. Positions 110–120 (SEPKYRIREQE) are enriched in basic and acidic residues. A phosphoserine mark is found at S121, S122, S127, and S130. Over residues 121-130 (SSGEEDSDLS) the composition is skewed to acidic residues. Basic and acidic residues predominate over residues 131-143 (PEEREKKRQFEMK). Residues 147–150 (HYNE) are required for binding PPP1CC catalytic center, displacing metal ions and inhibition of PPP1CC catalytic activity. Residues 167–179 (DDEEDEEMSETAD) are compositionally biased toward acidic residues. The span at 182 to 205 (SMNTEESNQGSTPSDQRQNKSQSS) shows a compositional bias: polar residues.

The protein belongs to the protein phosphatase inhibitor 2 family. Heterodimer with PP1. Post-translationally, phosphorylation on Ser-44 by ATM activates PP1 by dissociating the PP1-PPP1R2 complex. Phosphorylation on Thr-73 by GSK3 activates PP1 by dissociating the PP1-PPP1R2 complex.

Inhibitor of protein-phosphatase 1. This chain is Protein phosphatase inhibitor 2 (PPP1R2), found in Oryctolagus cuniculus (Rabbit).